The primary structure comprises 382 residues: Serine/arginine-rich splicing factor SR45a (382 aa).

Composition is skewed to low complexity over residues 30-45 (PMSY…SLSP), 54-68 (VSRS…SVSS), 177-195 (PSYS…SRSY), and 202-219 (SYSP…YSPF). 2 disordered regions span residues 30–76 (PMSY…PGNS) and 150–382 (KARR…SVSP). The segment covering 288 to 316 (RARDRSCSPYYRGRDRSYSPHYQGRDRSY) has biased composition (basic and acidic residues). Over residues 329 to 343 (VSGSVSPGGRSMSRS) the composition is skewed to low complexity. Residues 345–361 (SPRKGRKESRSKSRRHD) show a composition bias toward basic residues. Residues 364 to 382 (SSMCHSRSARSSTSRSVSP) show a composition bias toward low complexity.

Belongs to the splicing factor SR family. SR45 subfamily. As to quaternary structure, component of the spliceosome. Homodimer. Interacts with PRP38, SCL28, SR45, RNU1 and U2AF35B. Phosphorylated. As to expression, expressed in leaves, stems and roots.

Its subcellular location is the nucleus speckle. Functionally, probable splicing factor involved in constitutive and/or alternative splicing events. May bridge the 5' and 3' components of the spliceosome. This chain is Serine/arginine-rich splicing factor SR45a (SR45A), found in Arabidopsis thaliana (Mouse-ear cress).